We begin with the raw amino-acid sequence, 712 residues long: MLNSALLWKVWLRIDNSTDEVNQPIAVQFDEIDTVDDLKSRFFQKLSSTRWREINDNASIAIGLYAPKFDNQADNTSSNNTNDNSCRSKSNGAGSGANLSVNSNTKSSVSPTAGSFGLSKDLAKDRNVLQHPKPTQKRGALYDAFAAVPTVAATTNVDFPPNEAPMLSPQRPYSTSPKQFPATTKSPLLRFASVSPYPKFHSDNQIMASAGLTYVSPHNKNKYTRPLIRKGLNFTTESVNDCTYKIIFEPDELAINIYKELFGTMGSQPASQPLLIFSNVNLRQDVPPLDILNVVDYVPTNEEISQQKTQPTDHGAVGVFHLDDHISPGEQGLKQTIGDKADLKGKDGNSSPQEFKLITDEEQLRRASQELKDEEKDAESPWQAILLLPKGYKGGVDFRNKPVAHTDSSFNNEDTITHSELEVNTGSPSQESGSLNEAGIGITQPMSEVQRRKEDVTPASPILTSSQTPHYSNSLYNAPFAVSSPPDPLPNLFTTTSEKVFPKINVLIVEDNVINQAILGSFLRKHKISYKLAKNGQEAVNIWKEGGLHLIFMDLQLPVLSGIEAAKQIRDFEKQNGIGIQKSLNNSHSNLEKGTSKRFSQAPVIIVALTASNSQMDKRKALLSGCNDYLTKPVNLHWLSKKITEWGCMQALIDFDSWKQGESRMTDSVLVKSPQKPIAPSNPHSFKQATSMTPTHSPVRKNSNLSPTQIEL.

A disordered region spans residues 73-114 (ADNTSSNNTNDNSCRSKSNGAGSGANLSVNSNTKSSVSPTAG). The span at 74-85 (DNTSSNNTNDNS) shows a compositional bias: low complexity. The segment covering 87–113 (RSKSNGAGSGANLSVNSNTKSSVSPTA) has biased composition (polar residues). Ser-110, Ser-195, Ser-327, Ser-351, Ser-368, and Ser-380 each carry phosphoserine. Residues 340 to 362 (KADLKGKDGNSSPQEFKLITDEE) are disordered. A disordered region spans residues 448 to 468 (EVQRRKEDVTPASPILTSSQT). A Response regulatory domain is found at 505–647 (NVLIVEDNVI…WLSKKITEWG (143 aa)). Asp-554 carries the post-translational modification 4-aspartylphosphate. A disordered region spans residues 672–712 (KSPQKPIAPSNPHSFKQATSMTPTHSPVRKNSNLSPTQIEL). Residue Ser-673 is modified to Phosphoserine. The span at 682-712 (NPHSFKQATSMTPTHSPVRKNSNLSPTQIEL) shows a compositional bias: polar residues. Residue Thr-693 is modified to Phosphothreonine. 2 positions are modified to phosphoserine: Ser-703 and Ser-706.

It belongs to the SSK1 family. In terms of assembly, interacts with SSK2, SSK22 and YPD1. The phosphorelay mechanism involves the sequential transfer of a phosphate group from 'His-576' (H1) to 'Asp-1144' (D1) of SLN1, then to 'His-64' (H2) of YPD1 and finally to Asp-554 (D2) of SSK1.

The protein resides in the cytoplasm. Final receptor of the SLN1-YPD1-SSK1 two-component regulatory system, which controls activity of the HOG1 pathway in response to changes in the osmolarity of the extracellular environment. Under normal osmotic conditions, maintained in a phosphorylated and inactive state by the phosphorelay intermediate protein YPD1. Under conditions of high osmolarity, the histidine kinase SLN1 is no longer active and the unphosphorylated form of SSK1 interacts with and activates SSK2 and SSK22, two MAPKKKs that further stimulate the PBS2-HOG1 MAPKK-MAPK cascade. Unphosphorylated SSK1 is subsequently degraded by the UBC7-dependent ubiquitin-proteasome system to down-regulate the HOG1 pathway after completion of the osmotic adaptation. The polypeptide is Osmolarity two-component system protein SSK1 (Saccharomyces cerevisiae (strain ATCC 204508 / S288c) (Baker's yeast)).